Reading from the N-terminus, the 84-residue chain is Small ribosomal subunit protein bS18A (84 aa).

It belongs to the bacterial ribosomal protein bS18 family. As to quaternary structure, part of the 30S ribosomal subunit. Forms a tight heterodimer with protein bS6.

Binds as a heterodimer with protein bS6 to the central domain of the 16S rRNA, where it helps stabilize the platform of the 30S subunit. This Mycolicibacterium paratuberculosis (strain ATCC BAA-968 / K-10) (Mycobacterium paratuberculosis) protein is Small ribosomal subunit protein bS18A.